Reading from the N-terminus, the 98-residue chain is RNA-binding protein Hfq (98 aa).

The region spanning 11-71 is the Sm domain; that stretch reads DVFLNHVRRS…ISTVMPATPV (61 aa).

This sequence belongs to the Hfq family. As to quaternary structure, homohexamer.

Its function is as follows. RNA chaperone that binds small regulatory RNA (sRNAs) and mRNAs to facilitate mRNA translational regulation in response to envelope stress, environmental stress and changes in metabolite concentrations. Also binds with high specificity to tRNAs. The sequence is that of RNA-binding protein Hfq from Gluconacetobacter diazotrophicus (strain ATCC 49037 / DSM 5601 / CCUG 37298 / CIP 103539 / LMG 7603 / PAl5).